Consider the following 215-residue polypeptide: UPF0502 protein YceH (215 aa).

Lys-80 carries the N6-acetyllysine modification.

This sequence belongs to the UPF0502 family.

The sequence is that of UPF0502 protein YceH from Escherichia coli (strain K12 / MC4100 / BW2952).